Consider the following 1028-residue polypeptide: Protein SMAX1-LIKE 5 (1028 aa).

In terms of domain architecture, Clp R spans 8–199 (IQQTLTTEAA…CVEDCSVSSV (192 aa)). Repeat regions lie at residues 12–102 (LTTE…LNRL) and 116–199 (LANA…VSSV). The EAR motif lies at 871–875 (LDLNI).

Belongs to the ClpA/ClpB family. Interacts probably with TPL/TPR in an EAR-motif dependent manner. In terms of tissue distribution, detected in roots, seedlings and axillary branches.

May function in a transcriptional corepressor complex. The chain is Protein SMAX1-LIKE 5 from Arabidopsis thaliana (Mouse-ear cress).